Consider the following 738-residue polypeptide: DNA ligase (738 aa).

Residues 48 to 52 (DVVYD), 97 to 98 (SL), and Glu136 contribute to the NAD(+) site. Lys138 serves as the catalytic N6-AMP-lysine intermediate. Arg159, Glu196, Lys356, and Lys380 together coordinate NAD(+). The Zn(2+) site is built by Cys474, Cys477, Cys492, and Cys497. One can recognise a BRCT domain in the interval 659–738 (QLPQPLAGKT…SQLLELLEET (80 aa)).

The protein belongs to the NAD-dependent DNA ligase family. LigA subfamily. Mg(2+) serves as cofactor. Mn(2+) is required as a cofactor.

It catalyses the reaction NAD(+) + (deoxyribonucleotide)n-3'-hydroxyl + 5'-phospho-(deoxyribonucleotide)m = (deoxyribonucleotide)n+m + AMP + beta-nicotinamide D-nucleotide.. Functionally, DNA ligase that catalyzes the formation of phosphodiester linkages between 5'-phosphoryl and 3'-hydroxyl groups in double-stranded DNA using NAD as a coenzyme and as the energy source for the reaction. It is essential for DNA replication and repair of damaged DNA. This chain is DNA ligase, found in Cyanothece sp. (strain PCC 7425 / ATCC 29141).